A 638-amino-acid polypeptide reads, in one-letter code: Threonine--tRNA ligase (638 aa).

In terms of domain architecture, TGS spans 1 to 61 (MPVITLPDGS…DADAQLQIIT (61 aa)). The tract at residues 243–534 (DHRKIGKALN…LTEEFAGFFP (292 aa)) is catalytic. The Zn(2+) site is built by Cys-334, His-385, and His-511.

The protein belongs to the class-II aminoacyl-tRNA synthetase family. In terms of assembly, homodimer. Requires Zn(2+) as cofactor.

The protein resides in the cytoplasm. The catalysed reaction is tRNA(Thr) + L-threonine + ATP = L-threonyl-tRNA(Thr) + AMP + diphosphate + H(+). Catalyzes the attachment of threonine to tRNA(Thr) in a two-step reaction: L-threonine is first activated by ATP to form Thr-AMP and then transferred to the acceptor end of tRNA(Thr). Also edits incorrectly charged L-seryl-tRNA(Thr). This Alteromonas mediterranea (strain DSM 17117 / CIP 110805 / LMG 28347 / Deep ecotype) protein is Threonine--tRNA ligase.